Reading from the N-terminus, the 248-residue chain is Phosphoribosylaminoimidazole-succinocarboxamide synthase (248 aa).

It belongs to the SAICAR synthetase family.

It catalyses the reaction 5-amino-1-(5-phospho-D-ribosyl)imidazole-4-carboxylate + L-aspartate + ATP = (2S)-2-[5-amino-1-(5-phospho-beta-D-ribosyl)imidazole-4-carboxamido]succinate + ADP + phosphate + 2 H(+). It functions in the pathway purine metabolism; IMP biosynthesis via de novo pathway; 5-amino-1-(5-phospho-D-ribosyl)imidazole-4-carboxamide from 5-amino-1-(5-phospho-D-ribosyl)imidazole-4-carboxylate: step 1/2. This Methanothermobacter thermautotrophicus (strain ATCC 29096 / DSM 1053 / JCM 10044 / NBRC 100330 / Delta H) (Methanobacterium thermoautotrophicum) protein is Phosphoribosylaminoimidazole-succinocarboxamide synthase (purC).